We begin with the raw amino-acid sequence, 314 residues long: MRPLAIIGPTGSGKSQLALDVAERLAGEVPAEIVNADAMQLYRGMDIGTAKLSVAARRGIPHHQLDVLNVAETATVARYQQAAAADIEAIIARGHVPIVVGGSMLHVQSLLDNWSFPATDPAVRARWEECLAELGVGELHAELARRDPAAAATILPTDGRRIVRALEVIELTGQPFAASAPRIGAAQWGTAIIGLDCDTPILDDRLAVRTDSMFERGLVEEVRVLLRAGLRDGVTAARALGYAQVLAALDAGGGAELLDDAREQTYFGTRRYVRRQRSWFRRDHRVHWCDAGATGPSDRVAMVDEALRVWRHVT.

Residue 8–15 (GPTGSGKS) participates in ATP binding. 10-15 (TGSGKS) is a binding site for substrate.

Belongs to the IPP transferase family. In terms of assembly, monomer. The cofactor is Mg(2+).

It catalyses the reaction adenosine(37) in tRNA + dimethylallyl diphosphate = N(6)-dimethylallyladenosine(37) in tRNA + diphosphate. Its function is as follows. Catalyzes the transfer of a dimethylallyl group onto the adenine at position 37 in tRNAs that read codons beginning with uridine, leading to the formation of N6-(dimethylallyl)adenosine (i(6)A). The sequence is that of tRNA dimethylallyltransferase 1 from Mycobacterium ulcerans (strain Agy99).